A 156-amino-acid polypeptide reads, in one-letter code: Transcriptional repressor NrdR (156 aa).

Residues 3-34 fold into a zinc finger; that stretch reads CPKCSSTHSRVVDSRHADDANAIRRRRECENC. In terms of domain architecture, ATP-cone spans 49–139; the sequence is LIVVKKDGTR…VYKEFKDVDQ (91 aa).

This sequence belongs to the NrdR family. The cofactor is Zn(2+).

Negatively regulates transcription of bacterial ribonucleotide reductase nrd genes and operons by binding to NrdR-boxes. This is Transcriptional repressor NrdR from Staphylococcus haemolyticus (strain JCSC1435).